A 492-amino-acid chain; its full sequence is Fascin-2 (492 aa).

The protein belongs to the fascin family. In terms of tissue distribution, exclusively expressed in the eye, specifically in photoreceptor cells.

Its subcellular location is the cytoplasm. The protein resides in the cytoskeleton. The protein localises to the cell projection. It localises to the stereocilium. Its function is as follows. Acts as an actin bundling protein. May play a pivotal role in photoreceptor cell-specific events, such as disk morphogenesis. The protein is Fascin-2 (FSCN2) of Bos taurus (Bovine).